The primary structure comprises 319 residues: Free fatty acid receptor 3 (319 aa).

The Extracellular segment spans residues 1–15 (MDTSFFPGNHWLFFS). Residues 16–36 (VDLLVFLVGLPLNVMALVVFV) form a helical membrane-spanning segment. Over 37-43 (NKLRRRP) the chain is Cytoplasmic. Residues 44-64 (VAVDLLLLNLTISDLLLLLFL) form a helical membrane-spanning segment. Residues 65–98 (PFRIVEAACGMKWILPFIFCPLSGFLFFTTIYLT) lie on the Extracellular side of the membrane. Cys84 and Cys165 are oxidised to a cystine. The helical transmembrane segment at 99-119 (SLFLMTVSIERFLSVAYPLWY) threads the bilayer. Topologically, residues 120-127 (KTRPRLAQ) are cytoplasmic. The helical transmembrane segment at 128–148 (AGLVSGICWFLASAHCSVIYV) threads the bilayer. The Extracellular segment spans residues 149–183 (TEYWGNATYSQGTNGTCYLEFREDQLAILLPVRLE). A helical transmembrane segment spans residues 184–206 (MAVVLFMVPLCITSYCYSRLVWI). Residues 207-218 (LSQGASRRRRKR) lie on the Cytoplasmic side of the membrane. A helical membrane pass occupies residues 219–239 (VMGLLVATLLIFFVCFGPYNM). At 240–254 (SHVVGYVRGESPTWR) the chain is on the extracellular side. A helical membrane pass occupies residues 255-275 (SYVLLLSTLNSCIDPLVFYFS). Topologically, residues 276–319 (SSKFQADFHQLLSRLIRACVPWTQEVSLELKVKNGEEPSKECPS) are cytoplasmic.

It belongs to the G-protein coupled receptor 1 family. Expressed in the sympathetic nervous system.

Its subcellular location is the cell membrane. Its function is as follows. G protein-coupled receptor that is activated by a major product of dietary fiber digestion, the short chain fatty acids (SCFAs), and that plays a role in the regulation of whole-body energy homeostasis and in intestinal immunity. In omnivorous mammals, the short chain fatty acids acetate, propionate and butyrate are produced primarily by the gut microbiome that metabolizes dietary fibers. SCFAs serve as a source of energy but also act as signaling molecules. That G protein-coupled receptor is probably coupled to the pertussis toxin-sensitive, G(i/o)-alpha family of G proteins. Its activation results in the formation of inositol 1,4,5-trisphosphate, the mobilization of intracellular calcium, the phosphorylation of the MAPK3/ERK1 and MAPK1/ERK2 kinases and the inhibition of intracellular cAMP accumulation. Activated by SCFAs and by beta-hydroxybutyrate, a ketone body produced by the liver upon starvation, it inhibits N-type calcium channels and modulates the activity of sympathetic neurons through a signaling cascade involving the beta and gamma subunits of its coupled G protein, phospholipase C and MAP kinases. Thereby, it may regulate energy expenditure through the control of the sympathetic nervous system that controls for instance heart rate. Upon activation by SCFAs accumulating in the intestine, it may also signal to the brain via neural circuits which in turn would regulate intestinal gluconeogenesis. May also control the production of hormones involved in whole-body energy homeostasis. May for instance, regulate blood pressure through renin secretion. May also regulate secretion of the PYY peptide by enteroendocrine cells and control gut motility, intestinal transit rate, and the harvesting of energy from SCFAs produced by gut microbiota. May also indirectly regulate the production of LEP/Leptin, a hormone acting on the CNS to inhibit food intake, in response to the presence of short-chain fatty acids in the intestine. Finally, may also play a role in glucose homeostasis. Besides its role in energy homeostasis, may play a role in intestinal immunity. May mediate the activation of the inflammatory and immune response by SCFAs in the gut, regulating the rapid production of chemokines and cytokines by intestinal epithelial cells. The polypeptide is Free fatty acid receptor 3 (Ffar3) (Rattus norvegicus (Rat)).